The primary structure comprises 103 residues: Small ribosomal subunit protein uS10 (103 aa).

It belongs to the universal ribosomal protein uS10 family. In terms of assembly, part of the 30S ribosomal subunit.

Functionally, involved in the binding of tRNA to the ribosomes. In Pseudomonas savastanoi pv. phaseolicola (strain 1448A / Race 6) (Pseudomonas syringae pv. phaseolicola (strain 1448A / Race 6)), this protein is Small ribosomal subunit protein uS10.